Here is a 155-residue protein sequence, read N- to C-terminus: MRKNRAEKRKVLPDPVYNSVLVTRAINAIMLDGKKGIAQKILYGSFDLIAQKTQKDPLEIFNKAVENIMPRLELKVRRIAGANYQVPTDVSPERKVTLALRWLVTLSRKRHEKTMLDKIANEIIDASNNTGASVKKREDTHKMAEANKAFAHMRM.

Belongs to the universal ribosomal protein uS7 family. As to quaternary structure, part of the 30S ribosomal subunit. Contacts proteins S9 and S11.

Its function is as follows. One of the primary rRNA binding proteins, it binds directly to 16S rRNA where it nucleates assembly of the head domain of the 30S subunit. Is located at the subunit interface close to the decoding center, probably blocks exit of the E-site tRNA. The chain is Small ribosomal subunit protein uS7 from Mycoplasmoides gallisepticum (strain R(low / passage 15 / clone 2)) (Mycoplasma gallisepticum).